Consider the following 120-residue polypeptide: Large ribosomal subunit protein uL18 (120 aa).

This sequence belongs to the universal ribosomal protein uL18 family. Part of the 50S ribosomal subunit; part of the 5S rRNA/L5/L18/L25 subcomplex. Contacts the 5S and 23S rRNAs.

This is one of the proteins that bind and probably mediate the attachment of the 5S RNA into the large ribosomal subunit, where it forms part of the central protuberance. This Janthinobacterium sp. (strain Marseille) (Minibacterium massiliensis) protein is Large ribosomal subunit protein uL18.